Here is a 350-residue protein sequence, read N- to C-terminus: Methylthioribose-1-phosphate isomerase (350 aa).

The active-site Proton donor is the D241.

Belongs to the eIF-2B alpha/beta/delta subunits family. MtnA subfamily.

It is found in the cytoplasm. Its subcellular location is the nucleus. The enzyme catalyses 5-(methylsulfanyl)-alpha-D-ribose 1-phosphate = 5-(methylsulfanyl)-D-ribulose 1-phosphate. Its pathway is amino-acid biosynthesis; L-methionine biosynthesis via salvage pathway; L-methionine from S-methyl-5-thio-alpha-D-ribose 1-phosphate: step 1/6. In terms of biological role, catalyzes the interconversion of methylthioribose-1-phosphate (MTR-1-P) into methylthioribulose-1-phosphate (MTRu-1-P). The chain is Methylthioribose-1-phosphate isomerase from Nematostella vectensis (Starlet sea anemone).